The following is a 92-amino-acid chain: Small ribosomal subunit protein uS19c (92 aa).

It belongs to the universal ribosomal protein uS19 family.

The protein localises to the plastid. It localises to the chloroplast. Its function is as follows. Protein S19 forms a complex with S13 that binds strongly to the 16S ribosomal RNA. This Nephroselmis olivacea (Green alga) protein is Small ribosomal subunit protein uS19c.